A 437-amino-acid polypeptide reads, in one-letter code: Lipopolysaccharide biosynthesis protein RfbH (437 aa).

It belongs to the DegT/DnrJ/EryC1 family. Pyridoxal 5'-phosphate is required as a cofactor.

It functions in the pathway bacterial outer membrane biogenesis; LPS O-antigen biosynthesis. This is Lipopolysaccharide biosynthesis protein RfbH (rfbH) from Salmonella typhimurium (strain LT2 / SGSC1412 / ATCC 700720).